A 790-amino-acid polypeptide reads, in one-letter code: IQ motif and ubiquitin-like domain-containing protein (790 aa).

Residues 1–17 (MSNQPKKYETQNIANST) show a composition bias toward polar residues. Residues 1 to 49 (MSNQPKKYETQNIANSTEESDAFDIVTIPVPSEEPQESDQTEEHESGIE) are disordered. The Ubiquitin-like domain maps to 130–206 (ATVKVVLIPV…IQVEIFSTNP (77 aa)). The 30-residue stretch at 337–366 (RLKAVIVIQTYYRQWHAKIFVEDLRRQKSL) folds into the IQ domain.

In terms of assembly, component of the axonemal radial spoke 1 (RS1) complex, at least composed of spoke head proteins RSPH1, RSPH3, RSPH9 and the cilia-specific component RSPH4A or sperm-specific component RSPH6A, spoke stalk proteins RSPH14, DNAJB13, DYDC1, ROPN1L and NME5, and the anchor protein IQUB. Does not appear to be part of radial spoke complexes 2 or 3 (RS2 or RS3). Interacts with CALM1. Interacts with DNAJB13. Interacts with DYNLL2. Interacts with NME5. Interacts with RSPH3. Interacts with RSPH9. Interacts with ZMYND10. Interacts with calmodulin; the interaction occurs in conditions of low but not high calcium.

Its subcellular location is the cytoplasm. It is found in the cytoskeleton. The protein resides in the flagellum axoneme. It localises to the cell projection. The protein localises to the cilium. In terms of biological role, adapter protein that anchors the radial spoke 1 (RS1) complex to the A microtubule of outer doublet microtubules in axonemes. The triple radial spokes (RS1, RS2 and RS3) are required to modulate beating of the sperm flagellum. May play a role in inhibiting signaling via MAPK1/ERK2 and MAPK3/ERK1. Additionally, may play a role in the functioning of cilia. Not required for the functioning of tracheal or ependymal cilia. This is IQ motif and ubiquitin-like domain-containing protein (IQUB) from Macaca fascicularis (Crab-eating macaque).